Reading from the N-terminus, the 353-residue chain is D-alanine--D-alanine ligase (353 aa).

The region spanning 135–344 (KMVFAQAGLA…FPQLVDRLVQ (210 aa)) is the ATP-grasp domain. 171 to 226 (EAQLDYPMFVKPANLGSSVGISKVRTRDELEKALDLAAEYDRRLIVEAGVTAREVE) lines the ATP pocket. 3 residues coordinate Mg(2+): aspartate 297, glutamate 311, and asparagine 313.

This sequence belongs to the D-alanine--D-alanine ligase family. Mg(2+) is required as a cofactor. It depends on Mn(2+) as a cofactor.

It localises to the cytoplasm. The catalysed reaction is 2 D-alanine + ATP = D-alanyl-D-alanine + ADP + phosphate + H(+). The protein operates within cell wall biogenesis; peptidoglycan biosynthesis. Its function is as follows. Cell wall formation. This chain is D-alanine--D-alanine ligase, found in Picosynechococcus sp. (strain ATCC 27264 / PCC 7002 / PR-6) (Agmenellum quadruplicatum).